Consider the following 474-residue polypeptide: Glutathione synthetase (474 aa).

A2 carries the N-acetylalanine modification. Substrate is bound at residue R125. E144 is an ATP binding site. E144 and N146 together coordinate Mg(2+). Residues 148–151 (VSAS), 214–216 (ERN), Q220, and 267–270 (RDGY) each bind substrate. ATP-binding positions include K305, 364–373 (KPQREGGGNN), Y375, and 398–401 (MEKI). E368 is a binding site for Mg(2+). S415 is modified (phosphoserine). E425 contributes to the ATP binding site. R450 is a binding site for substrate. ATP-binding residues include K452 and D458. Position 461–462 (461–462 (VA)) interacts with substrate.

The protein belongs to the eukaryotic GSH synthase family. In terms of assembly, homodimer. Mg(2+) serves as cofactor.

It catalyses the reaction gamma-L-glutamyl-L-cysteine + glycine + ATP = glutathione + ADP + phosphate + H(+). The enzyme catalyses gamma-L-glutamyl-(2S)-2-aminobutanoate + glycine + ATP = ophthalmate + ADP + phosphate + H(+). The protein operates within sulfur metabolism; glutathione biosynthesis; glutathione from L-cysteine and L-glutamate: step 2/2. Catalyzes the production of glutathione from gamma-glutamylcysteine and glycine in an ATP-dependent manner. Glutathione (gamma-glutamylcysteinylglycine, GSH) is the most abundant intracellular thiol in living aerobic cells and is required for numerous processes including the protection of cells against oxidative damage, amino acid transport, the detoxification of foreign compounds, the maintenance of protein sulfhydryl groups in a reduced state and acts as a cofactor for a number of enzymes. Participates in ophthalmate biosynthesis in hepatocytes. This chain is Glutathione synthetase, found in Bos taurus (Bovine).